A 190-amino-acid polypeptide reads, in one-letter code: Xanthine phosphoribosyltransferase (190 aa).

The xanthine site is built by L20 and N27. Residue A129–A133 coordinates 5-phospho-alpha-D-ribose 1-diphosphate. Residue K157 coordinates xanthine.

It belongs to the purine/pyrimidine phosphoribosyltransferase family. Xpt subfamily. Homodimer.

The protein resides in the cytoplasm. It catalyses the reaction XMP + diphosphate = xanthine + 5-phospho-alpha-D-ribose 1-diphosphate. It functions in the pathway purine metabolism; XMP biosynthesis via salvage pathway; XMP from xanthine: step 1/1. Functionally, converts the preformed base xanthine, a product of nucleic acid breakdown, to xanthosine 5'-monophosphate (XMP), so it can be reused for RNA or DNA synthesis. This Laribacter hongkongensis (strain HLHK9) protein is Xanthine phosphoribosyltransferase.